The sequence spans 562 residues: ATP synthase subunit beta, mitochondrial (562 aa).

Composition is skewed to low complexity over residues 1–13 (MASRRLLSSLLRS) and 20–40 (SKSPISNINPKLSSSSPSSKS). 2 disordered regions span residues 1–43 (MASR…SRAS) and 58–83 (SAAAAAPPQPPPAKPEGGKGGGKITD). The N-terminal 55 residues, 1-55 (MASRRLLSSLLRSSSRRSVSKSPISNINPKLSSSSPSSKSRASPYGYLLTRAAEY), are a transit peptide targeting the mitochondrion. ATP is bound at residue 237–244 (GGAGVGKT).

The protein belongs to the ATPase alpha/beta chains family. In terms of assembly, F-type ATPases have 2 components, CF(1) - the catalytic core - and CF(0) - the membrane proton channel. CF(1) has five subunits: alpha(3), beta(3), gamma(1), delta(1), epsilon(1). CF(0) has three main subunits: a, b and c.

It is found in the mitochondrion. It localises to the mitochondrion inner membrane. The enzyme catalyses ATP + H2O + 4 H(+)(in) = ADP + phosphate + 5 H(+)(out). Functionally, mitochondrial membrane ATP synthase (F(1)F(0) ATP synthase or Complex V) produces ATP from ADP in the presence of a proton gradient across the membrane which is generated by electron transport complexes of the respiratory chain. F-type ATPases consist of two structural domains, F(1) - containing the extramembraneous catalytic core, and F(0) - containing the membrane proton channel, linked together by a central stalk and a peripheral stalk. During catalysis, ATP synthesis in the catalytic domain of F(1) is coupled via a rotary mechanism of the central stalk subunits to proton translocation. Subunits alpha and beta form the catalytic core in F(1). Rotation of the central stalk against the surrounding alpha(3)beta(3) subunits leads to hydrolysis of ATP in three separate catalytic sites on the beta subunits. The polypeptide is ATP synthase subunit beta, mitochondrial (ATPB) (Hevea brasiliensis (Para rubber tree)).